We begin with the raw amino-acid sequence, 252 residues long: Triosephosphate isomerase (252 aa).

Residue 10–12 (NWK) coordinates substrate. H96 serves as the catalytic Electrophile. E168 serves as the catalytic Proton acceptor. Substrate-binding positions include G174, S214, and 235–236 (GG).

Belongs to the triosephosphate isomerase family. Homodimer.

The protein resides in the cytoplasm. The enzyme catalyses D-glyceraldehyde 3-phosphate = dihydroxyacetone phosphate. It participates in carbohydrate biosynthesis; gluconeogenesis. It functions in the pathway carbohydrate degradation; glycolysis; D-glyceraldehyde 3-phosphate from glycerone phosphate: step 1/1. Its function is as follows. Involved in the gluconeogenesis. Catalyzes stereospecifically the conversion of dihydroxyacetone phosphate (DHAP) to D-glyceraldehyde-3-phosphate (G3P). This chain is Triosephosphate isomerase, found in Streptococcus thermophilus (strain CNRZ 1066).